The chain runs to 444 residues: Trigger factor (444 aa).

A PPIase FKBP-type domain is found at 166 to 251 (GDQIVIDFKG…VKAVKAPKAA (86 aa)).

It belongs to the FKBP-type PPIase family. Tig subfamily.

Its subcellular location is the cytoplasm. It catalyses the reaction [protein]-peptidylproline (omega=180) = [protein]-peptidylproline (omega=0). In terms of biological role, involved in protein export. Acts as a chaperone by maintaining the newly synthesized protein in an open conformation. Functions as a peptidyl-prolyl cis-trans isomerase. The sequence is that of Trigger factor from Paracoccus denitrificans (strain Pd 1222).